The primary structure comprises 455 residues: Exodeoxyribonuclease 7 large subunit (455 aa).

It belongs to the XseA family. In terms of assembly, heterooligomer composed of large and small subunits.

It localises to the cytoplasm. It catalyses the reaction Exonucleolytic cleavage in either 5'- to 3'- or 3'- to 5'-direction to yield nucleoside 5'-phosphates.. Bidirectionally degrades single-stranded DNA into large acid-insoluble oligonucleotides, which are then degraded further into small acid-soluble oligonucleotides. The chain is Exodeoxyribonuclease 7 large subunit from Escherichia fergusonii (strain ATCC 35469 / DSM 13698 / CCUG 18766 / IAM 14443 / JCM 21226 / LMG 7866 / NBRC 102419 / NCTC 12128 / CDC 0568-73).